Reading from the N-terminus, the 126-residue chain is Alpha-lactalbumin (126 aa).

The region spanning Arg1–Cys126 is the C-type lysozyme domain. 4 disulfide bridges follow: Cys6-Cys126, Cys30-Cys117, Cys63-Cys82, and Cys78-Cys96. N-linked (GlcNAc...) asparagine glycosylation is present at Asn47. Residues Lys84, Asp87, Asp89, Asp92, and Asp93 each coordinate Ca(2+).

This sequence belongs to the glycosyl hydrolase 22 family. Lactose synthase (LS) is a heterodimer of a catalytic component, beta1,4-galactosyltransferase (beta4Gal-T1) and a regulatory component, alpha-lactalbumin (LA). In terms of tissue distribution, mammary gland specific. Secreted in milk.

The protein resides in the secreted. In terms of biological role, regulatory subunit of lactose synthase, changes the substrate specificity of galactosyltransferase in the mammary gland making glucose a good acceptor substrate for this enzyme. This enables LS to synthesize lactose, the major carbohydrate component of milk. In other tissues, galactosyltransferase transfers galactose onto the N-acetylglucosamine of the oligosaccharide chains in glycoproteins. This chain is Alpha-lactalbumin (LALBA), found in Ornithorhynchus anatinus (Duckbill platypus).